A 236-amino-acid polypeptide reads, in one-letter code: MGRNSGFTFKQFHVEHDRCAMKVGTDGILLGAWAPVAETRRVLDIGTGSGLVALMLAQRSRSDCIIDAVDLDMNAATQARENVAASPWETRINIMEGAIQDYQATPYDLIVSNPPYFGAGQSLRDPARALARHTGSLDSRDLLAACDRLLTPVGQVALVLPTAMADEILCISADYDLHGVCYTAVINRAGKEANRVLLLLGRGLNRCEQGEIVIHSAGGAYSDRYIQLTHPFYLKM.

The protein belongs to the methyltransferase superfamily. tRNA (adenine-N(6)-)-methyltransferase family.

It localises to the cytoplasm. The catalysed reaction is adenosine(37) in tRNA1(Val) + S-adenosyl-L-methionine = N(6)-methyladenosine(37) in tRNA1(Val) + S-adenosyl-L-homocysteine + H(+). Functionally, specifically methylates the adenine in position 37 of tRNA(1)(Val) (anticodon cmo5UAC). The protein is tRNA1(Val) (adenine(37)-N6)-methyltransferase of Aeromonas salmonicida (strain A449).